The following is a 130-amino-acid chain: Methylglyoxal synthase (130 aa).

Residues 1 to 130 (MSTPRIALIA…DLARRLPVKA (130 aa)) enclose the MGS-like domain. Residues His-11, Lys-15, 37–40 (TGTT), and 57–58 (SG) each bind substrate. Asp-63 (proton donor/acceptor) is an active-site residue. His-90 lines the substrate pocket.

The protein belongs to the methylglyoxal synthase family.

It catalyses the reaction dihydroxyacetone phosphate = methylglyoxal + phosphate. Functionally, catalyzes the formation of methylglyoxal from dihydroxyacetone phosphate. This chain is Methylglyoxal synthase, found in Burkholderia thailandensis (strain ATCC 700388 / DSM 13276 / CCUG 48851 / CIP 106301 / E264).